Consider the following 121-residue polypeptide: Small ribosomal subunit protein uS13 (121 aa).

Residues 91 to 121 (HRRGLPVRGQKTKNNARTRKGPVKTVANKKK) form a disordered region.

Belongs to the universal ribosomal protein uS13 family. As to quaternary structure, part of the 30S ribosomal subunit. Forms a loose heterodimer with protein S19. Forms two bridges to the 50S subunit in the 70S ribosome.

Located at the top of the head of the 30S subunit, it contacts several helices of the 16S rRNA. In the 70S ribosome it contacts the 23S rRNA (bridge B1a) and protein L5 of the 50S subunit (bridge B1b), connecting the 2 subunits; these bridges are implicated in subunit movement. Contacts the tRNAs in the A and P-sites. This Staphylococcus saprophyticus subsp. saprophyticus (strain ATCC 15305 / DSM 20229 / NCIMB 8711 / NCTC 7292 / S-41) protein is Small ribosomal subunit protein uS13.